The chain runs to 92 residues: MWPVFWTVVRTYAPYVTFPVAFVVGAVGYHLEWFIRGKDPQPVEEEKSISERREDRKLDELLGKDHTQVVSLKDKLEFAPKAVLNRNRPEKN.

Residues 15–34 form a helical membrane-spanning segment; that stretch reads YVTFPVAFVVGAVGYHLEWF.

Belongs to the SMIM12 family.

Its subcellular location is the membrane. The chain is Small integral membrane protein 12 (SMIM12) from Nomascus leucogenys (Northern white-cheeked gibbon).